The primary structure comprises 231 residues: RING finger protein 141 (231 aa).

The N-myristoyl glycine moiety is linked to residue glycine 2. Residues 156–193 form an RING-type zinc finger; the sequence is CCICMDGRADLILPCAHSFCQKCIDKWSDRHRNCPICR.

It localises to the membrane. Functionally, may be involved in spermatogenesis. The sequence is that of RING finger protein 141 (RNF141) from Canis lupus familiaris (Dog).